The chain runs to 71 residues: UPF0435 protein SERP1418 (71 aa).

Belongs to the UPF0435 family.

This chain is UPF0435 protein SERP1418, found in Staphylococcus epidermidis (strain ATCC 35984 / DSM 28319 / BCRC 17069 / CCUG 31568 / BM 3577 / RP62A).